Here is a 355-residue protein sequence, read N- to C-terminus: Heme A synthase (355 aa).

8 helical membrane-spanning segments follow: residues 21–41, 85–102, 136–156, 173–193, 208–228, 264–284, 299–319, and 322–342; these read LARWLWAVALLVIIVVGVGGI, INLGMTLAGFKAIFFWEW, LFALTALVGLQGAIGWWMVAS, LLTALFLLAGLVWTARDLGAL, AIGVIAILFVQLLLGAWVAGL, FLIHFLHRWWSWAAAGALLLL, ALVIVVAAQMLLGIWTIVSGV, and WVAVMHQVVGAILVAVTAAAL. His270 serves as a coordination point for heme. His327 provides a ligand contact to heme.

The protein belongs to the COX15/CtaA family. Type 2 subfamily. In terms of assembly, interacts with CtaB. Requires heme b as cofactor.

It is found in the cell membrane. It carries out the reaction Fe(II)-heme o + 2 A + H2O = Fe(II)-heme a + 2 AH2. It participates in porphyrin-containing compound metabolism; heme A biosynthesis; heme A from heme O: step 1/1. Its function is as follows. Catalyzes the conversion of heme O to heme A by two successive hydroxylations of the methyl group at C8. The first hydroxylation forms heme I, the second hydroxylation results in an unstable dihydroxymethyl group, which spontaneously dehydrates, resulting in the formyl group of heme A. In Sphingopyxis alaskensis (strain DSM 13593 / LMG 18877 / RB2256) (Sphingomonas alaskensis), this protein is Heme A synthase.